A 619-amino-acid polypeptide reads, in one-letter code: Probable serine/threonine-protein kinase WNK8 (619 aa).

The segment covering 1–14 (MSGARRCGDRRSER) has biased composition (basic and acidic residues). Residues 1–30 (MSGARRCGDRRSERSSVVGDNRNGYVETDP) are disordered. In terms of domain architecture, Protein kinase spans 35–291 (GRLSEVLGKG…AEELLLDPFL (257 aa)). ATP contacts are provided by residues 115–118 (TELF) and K163. D180 serves as the catalytic Proton acceptor. Disordered stretches follow at residues 293 to 335 (PPQN…AKTT), 419 to 464 (YADD…PGPH), 508 to 555 (CSAS…SMVD), and 585 to 619 (GFRD…HYMF). The span at 419 to 428 (YADDDDDDDV) shows a compositional bias: acidic residues. Positions 439 to 448 (SSSPTSSQGS) are enriched in low complexity. Residues 602 to 619 (QHRRRSSSKVDHKHHYMF) are compositionally biased toward basic residues.

The protein belongs to the protein kinase superfamily. Ser/Thr protein kinase family. WNK subfamily.

The enzyme catalyses L-seryl-[protein] + ATP = O-phospho-L-seryl-[protein] + ADP + H(+). It catalyses the reaction L-threonyl-[protein] + ATP = O-phospho-L-threonyl-[protein] + ADP + H(+). The protein is Probable serine/threonine-protein kinase WNK8 (WNK8) of Oryza sativa subsp. japonica (Rice).